A 324-amino-acid chain; its full sequence is MCTAITYQSYNNYFGRNFDYEISYNEMVTITPRKYPLVFRKVENLDHHYAIIGITADVESYPLYYDAMNEKGLCIAGLNFAGYADYKKYDADKVNITPFELIPWLLGQFSSVREVKKNIQKLNLVNINFSEQLPLSPLHWLVADKQESIVIESVKEGLKIYDNPVGVLTNNPNFDYQLFNLNNYRALSNSTPQNSFSEKVDLDSYSRGMGGLGLPGDLSSMSRFVRAAFTKLNSLSMQTESGSVSQFFHILGSVEQQKGLCEVTDGKYEYTIYSSCCDMDKGVYYYRTYDNSQINSVSLNHEHLDTTELISYPLRSEAQYYAVN.

Residue cysteine 2 is the Nucleophile; acyl-thioester intermediate of the active site. Residues cysteine 2 and arginine 16 each coordinate deoxycholate. Asparagine 79 contacts taurine.

The protein belongs to the peptidase C59 family. Homotetramer. The tetramer consists of a dimer of dimers.

It carries out the reaction glycocholate + H2O = cholate + glycine. The enzyme catalyses glycodeoxycholate + H2O = deoxycholate + glycine. It catalyses the reaction chenodeoxycholate + glycine = glycochenodeoxycholate + H2O. The catalysed reaction is cholate + taurine = taurocholate + H2O. It carries out the reaction taurodeoxycholate + H2O = deoxycholate + taurine. The enzyme catalyses taurochenodeoxycholate + H2O = chenodeoxycholate + taurine. It catalyses the reaction an L-alpha-amino acid + cholate = an N-choloyl-L-alpha-amino acid + H2O. The catalysed reaction is an L-alpha-amino acid + taurocholate = an N-choloyl-L-alpha-amino acid + taurine. It carries out the reaction glycocholate + an L-alpha-amino acid = an N-choloyl-L-alpha-amino acid + glycine. It participates in lipid metabolism; bile acid biosynthesis. Its function is as follows. Possesses dual functions in bile acid metabolism. Acts as a bile salt hydrolase that catalyzes the deconjugation of glycine- and taurine-linked bile salts, which occurs naturally in the intestines of animals, releasing amino acid residues and deconjugated bile salts (bile acids). Can hydrolyze the amide bond in the bile salts glycocholate (GCA), glycodeoxycholate (GDCA), glycochenodeoxycholate (GCDCA), taurocholate (TCA), taurodeoxycholate (TDCA) and taurochenodeoxycholate (TCDCA). Shows a preference for glycine-conjugated bile acids as substrates. Also acts as an amine N-acyltransferase that conjugates a wide variety of amino acids to conjugated and non-conjugated bile acids, thus producing bacterial bile acid amidates (BBAAs) - also named microbially conjugated bile acids (MCBAs) - in the gastrointestinal tract. These BBAAs may facilitate communication between the microbiota and host through the activation of host ligand-activated transcription factors. The sequence is that of Bile salt hydrolase/transferase from Lactiplantibacillus plantarum (strain ATCC BAA-793 / NCIMB 8826 / WCFS1) (Lactobacillus plantarum).